The chain runs to 428 residues: Divergent protein kinase domain 1A (428 aa).

Residues 1–27 (MARGLFSRAWLSKTHHFQARLSYIRVK) lie on the Cytoplasmic side of the membrane. Residues 28-48 (YLFLTWLAVFVSSWVVYVQYS) form a helical membrane-spanning segment. Residues 49 to 428 (TYTELCRGRE…WKQISHTTDS (380 aa)) are Lumenal-facing.

It belongs to the DIPK family. Among the many cysteines in the lumenal domain, most are probably involved in disulfide bonds.

The protein localises to the endoplasmic reticulum membrane. This chain is Divergent protein kinase domain 1A (dipk1a), found in Danio rerio (Zebrafish).